The primary structure comprises 192 residues: Fe/S biogenesis protein NfuA (192 aa).

[4Fe-4S] cluster is bound by residues cysteine 150 and cysteine 153.

The protein belongs to the NfuA family. Homodimer. [4Fe-4S] cluster serves as cofactor.

Its function is as follows. Involved in iron-sulfur cluster biogenesis. Binds a 4Fe-4S cluster, can transfer this cluster to apoproteins, and thereby intervenes in the maturation of Fe/S proteins. Could also act as a scaffold/chaperone for damaged Fe/S proteins. This chain is Fe/S biogenesis protein NfuA, found in Buchnera aphidicola subsp. Acyrthosiphon pisum (strain 5A).